The chain runs to 180 residues: Large ribosomal subunit protein uL6 (180 aa).

The protein belongs to the universal ribosomal protein uL6 family. Part of the 50S ribosomal subunit.

Its function is as follows. This protein binds to the 23S rRNA, and is important in its secondary structure. It is located near the subunit interface in the base of the L7/L12 stalk, and near the tRNA binding site of the peptidyltransferase center. The sequence is that of Large ribosomal subunit protein uL6 from Thermodesulfovibrio yellowstonii (strain ATCC 51303 / DSM 11347 / YP87).